Here is a 555-residue protein sequence, read N- to C-terminus: Beta-fructofuranosidase, cell wall isozyme (555 aa).

A signal peptide spans 1-22; sequence MAISSIFLLSLFSLIYVIPIEA. Residues 58 to 61, Q77, W85, and 120 to 121 contribute to the substrate site; these read WIND and WS. D61 is an active-site residue. The active site involves D140. N-linked (GlcNAc...) asparagine glycans are attached at residues N154 and N181. Residues 186-187, E241, and D277 each bind substrate; that span reads RD. Residue N337 is glycosylated (N-linked (GlcNAc...) asparagine). C435 and C481 are oxidised to a cystine.

The protein belongs to the glycosyl hydrolase 32 family.

It catalyses the reaction Hydrolysis of terminal non-reducing beta-D-fructofuranoside residues in beta-D-fructofuranosides.. The protein is Beta-fructofuranosidase, cell wall isozyme (BFRUCT1) of Pisum sativum (Garden pea).